We begin with the raw amino-acid sequence, 284 residues long: Formamidopyrimidine-DNA glycosylase (284 aa).

P2 (schiff-base intermediate with DNA) is an active-site residue. E3 (proton donor) is an active-site residue. K58 functions as the Proton donor; for beta-elimination activity in the catalytic mechanism. Residues H97, R120, and R165 each contribute to the DNA site. The FPG-type zinc-finger motif lies at 250–284 (FVYDRAGEPCKVCGTPVRQIVQGQRSTFYCTHCQH). The Proton donor; for delta-elimination activity role is filled by R274.

The protein belongs to the FPG family. As to quaternary structure, monomer. It depends on Zn(2+) as a cofactor.

It catalyses the reaction Hydrolysis of DNA containing ring-opened 7-methylguanine residues, releasing 2,6-diamino-4-hydroxy-5-(N-methyl)formamidopyrimidine.. The enzyme catalyses 2'-deoxyribonucleotide-(2'-deoxyribose 5'-phosphate)-2'-deoxyribonucleotide-DNA = a 3'-end 2'-deoxyribonucleotide-(2,3-dehydro-2,3-deoxyribose 5'-phosphate)-DNA + a 5'-end 5'-phospho-2'-deoxyribonucleoside-DNA + H(+). Functionally, involved in base excision repair of DNA damaged by oxidation or by mutagenic agents. Acts as a DNA glycosylase that recognizes and removes damaged bases. Has a preference for oxidized purines, such as 7,8-dihydro-8-oxoguanine (8-oxoG). Has AP (apurinic/apyrimidinic) lyase activity and introduces nicks in the DNA strand. Cleaves the DNA backbone by beta-delta elimination to generate a single-strand break at the site of the removed base with both 3'- and 5'-phosphates. The protein is Formamidopyrimidine-DNA glycosylase of Cupriavidus pinatubonensis (strain JMP 134 / LMG 1197) (Cupriavidus necator (strain JMP 134)).